A 279-amino-acid chain; its full sequence is Fatty acid elongase 2 (279 aa).

The next 7 membrane-spanning stretches (helical) occupy residues 16-36 (LMLE…ALVW), 61-81 (AIIV…IVVV), 112-132 (FWIG…MFLL), 138-158 (PPFL…HTYC), 164-184 (MVLF…YFAM), 196-216 (FAPF…LVTT), and 242-262 (MGVI…LNSY). The HxxHH motif motif lies at 142–146 (HWYHH). The active-site Nucleophile is the H145.

Belongs to the ELO family.

It is found in the endoplasmic reticulum membrane. It catalyses the reaction an acyl-CoA + malonyl-CoA + H(+) = a 3-oxoacyl-CoA + CO2 + CoA. It participates in lipid metabolism; fatty acid biosynthesis. Functionally, involved in the synthesis of fatty acids. Elongates C10 fatty acids to C14. Required for the maintenance of the global lipidome profile in this parasite. This Trypanosoma cruzi (strain CL Brener) protein is Fatty acid elongase 2.